The primary structure comprises 218 residues: Probable transaldolase (218 aa).

Lys83 acts as the Schiff-base intermediate with substrate in catalysis.

Belongs to the transaldolase family. Type 3B subfamily.

Its subcellular location is the cytoplasm. It carries out the reaction D-sedoheptulose 7-phosphate + D-glyceraldehyde 3-phosphate = D-erythrose 4-phosphate + beta-D-fructose 6-phosphate. Its pathway is carbohydrate degradation; pentose phosphate pathway; D-glyceraldehyde 3-phosphate and beta-D-fructose 6-phosphate from D-ribose 5-phosphate and D-xylulose 5-phosphate (non-oxidative stage): step 2/3. Transaldolase is important for the balance of metabolites in the pentose-phosphate pathway. The sequence is that of Probable transaldolase from Thermotoga sp. (strain RQ2).